The chain runs to 142 residues: Large ribosomal subunit protein bL17 (142 aa).

The protein belongs to the bacterial ribosomal protein bL17 family. In terms of assembly, part of the 50S ribosomal subunit. Contacts protein L32.

The polypeptide is Large ribosomal subunit protein bL17 (Brucella abortus (strain S19)).